We begin with the raw amino-acid sequence, 468 residues long: Squamosa promoter-binding-like protein 5 (468 aa).

An SBP-type zinc finger spans residues 204–281; that stretch reads PPRCQAEGCK…TEHNRRRRKP (78 aa). Residues C207, C212, C229, H232, C248, C251, H255, and C267 each coordinate Zn(2+). The short motif at 264 to 280 is the Bipartite nuclear localization signal element; sequence KRSCRKRLTEHNRRRRK. Disordered regions lie at residues 270 to 305, 354 to 374, and 405 to 458; these read RLTE…DASI, TLSL…DGGL, and HHHL…SNNN. Residues 363–372 are compositionally biased toward acidic residues; the sequence is QEEDDEDEDG. The segment covering 438-458 has biased composition (low complexity); sequence NNNNILSCSSASDQQNSSNNN.

In terms of tissue distribution, ubiquitous.

It is found in the nucleus. Functionally, trans-acting factor that binds specifically to the consensus nucleotide sequence 5'-TNCGTACAA-3'. In Oryza sativa subsp. japonica (Rice), this protein is Squamosa promoter-binding-like protein 5 (SPL5).